Reading from the N-terminus, the 313-residue chain is Ribosomal RNA small subunit methyltransferase H (313 aa).

S-adenosyl-L-methionine-binding positions include 35–37, Asp55, Phe81, Asp103, and Gln110; that span reads GGH.

Belongs to the methyltransferase superfamily. RsmH family.

It is found in the cytoplasm. The enzyme catalyses cytidine(1402) in 16S rRNA + S-adenosyl-L-methionine = N(4)-methylcytidine(1402) in 16S rRNA + S-adenosyl-L-homocysteine + H(+). Functionally, specifically methylates the N4 position of cytidine in position 1402 (C1402) of 16S rRNA. This is Ribosomal RNA small subunit methyltransferase H from Pseudomonas paraeruginosa (strain DSM 24068 / PA7) (Pseudomonas aeruginosa (strain PA7)).